Reading from the N-terminus, the 390-residue chain is 4-hydroxycoumarin synthase 1 (390 aa).

C161 is a catalytic residue.

It belongs to the thiolase-like superfamily. Chalcone/stilbene synthases family. In terms of assembly, homodimer.

It catalyses the reaction 2-hydroxybenzoyl-CoA + malonyl-CoA = 4-hydroxycoumarin + CO2 + 2 CoA. In terms of biological role, type III polyketide synthase involved preferentially in the biosynthesis of 4-hydroxycoumarin from salicoyl-CoA. Can also use benzoyl-CoA and malonyl-CoA to produce 3,5-dihydroxybiphenyl as a major product and benzoyldiacetic acid lactone as a minor side product. Can also use m-hydroxybenzoyl-CoA as substrate, producing m-hydroxybenzoyl diacetic acid lactone as a derailment product. No activity with p-hydroxybenzoyl-CoA, CoA-linked cinnamic acids or acetyl-CoA. This chain is 4-hydroxycoumarin synthase 1 (BIS2), found in Sorbus aucuparia (European mountain ash).